We begin with the raw amino-acid sequence, 563 residues long: Arginine--tRNA ligase (563 aa).

A 'HIGH' region motif is present at residues 137–147; it reads ANPTGLLHMGN.

It belongs to the class-I aminoacyl-tRNA synthetase family. As to quaternary structure, monomer.

It localises to the cytoplasm. The catalysed reaction is tRNA(Arg) + L-arginine + ATP = L-arginyl-tRNA(Arg) + AMP + diphosphate. This Desulforudis audaxviator (strain MP104C) protein is Arginine--tRNA ligase.